The primary structure comprises 185 residues: Large ribosomal subunit protein bL12c (185 aa).

The N-terminal 47 residues, 1-47 (MASTALSSAFSLLSLPSSSSPAAAAAAAPRSFAVPSRARPRRAVAVV), are a transit peptide targeting the chloroplast.

This sequence belongs to the bacterial ribosomal protein bL12 family.

It is found in the plastid. The protein resides in the chloroplast. The sequence is that of Large ribosomal subunit protein bL12c (RPL12-2) from Oryza sativa subsp. japonica (Rice).